The primary structure comprises 463 residues: tRNA modification GTPase MnmE (463 aa).

(6S)-5-formyl-5,6,7,8-tetrahydrofolate is bound by residues Arg26, Glu88, and Arg127. In terms of domain architecture, TrmE-type G spans 224–383 (GLATAIIGRP…LEQRIAKMFF (160 aa)). Asn234 is a K(+) binding site. GTP-binding positions include 234-239 (NVGKSS), 253-259 (TDVAGTT), and 278-281 (DTAG). Ser238 lines the Mg(2+) pocket. The K(+) site is built by Thr253, Val255, and Thr258. Thr259 is a Mg(2+) binding site. Residue Lys463 participates in (6S)-5-formyl-5,6,7,8-tetrahydrofolate binding.

This sequence belongs to the TRAFAC class TrmE-Era-EngA-EngB-Septin-like GTPase superfamily. TrmE GTPase family. As to quaternary structure, homodimer. Heterotetramer of two MnmE and two MnmG subunits. K(+) is required as a cofactor.

It is found in the cytoplasm. In terms of biological role, exhibits a very high intrinsic GTPase hydrolysis rate. Involved in the addition of a carboxymethylaminomethyl (cmnm) group at the wobble position (U34) of certain tRNAs, forming tRNA-cmnm(5)s(2)U34. This chain is tRNA modification GTPase MnmE, found in Lactiplantibacillus plantarum (strain ATCC BAA-793 / NCIMB 8826 / WCFS1) (Lactobacillus plantarum).